The chain runs to 223 residues: Putative nudix hydrolase 2 (223 aa).

One can recognise a Nudix hydrolase domain in the interval 72-213 (ASADGVSIIA…SIVVESTLLA (142 aa)). The Nudix box signature appears at 111–132 (GLIDAGETAQQAAIRELKEETG). Glutamate 126 and glutamate 130 together coordinate Mg(2+).

This sequence belongs to the Nudix hydrolase family. Mg(2+) serves as cofactor. Mn(2+) is required as a cofactor.

In terms of biological role, probably mediates the hydrolysis of some nucleoside diphosphate derivatives. The chain is Putative nudix hydrolase 2 (ndx-2) from Caenorhabditis elegans.